Reading from the N-terminus, the 879-residue chain is Alanine--tRNA ligase (879 aa).

Residues H564, H568, C666, and H670 each contribute to the Zn(2+) site.

It belongs to the class-II aminoacyl-tRNA synthetase family. The cofactor is Zn(2+).

Its subcellular location is the cytoplasm. It catalyses the reaction tRNA(Ala) + L-alanine + ATP = L-alanyl-tRNA(Ala) + AMP + diphosphate. Catalyzes the attachment of alanine to tRNA(Ala) in a two-step reaction: alanine is first activated by ATP to form Ala-AMP and then transferred to the acceptor end of tRNA(Ala). Also edits incorrectly charged Ser-tRNA(Ala) and Gly-tRNA(Ala) via its editing domain. In Crocosphaera subtropica (strain ATCC 51142 / BH68) (Cyanothece sp. (strain ATCC 51142)), this protein is Alanine--tRNA ligase.